Reading from the N-terminus, the 452-residue chain is Probable ECA polymerase (452 aa).

A run of 11 helical transmembrane segments spans residues 6–26 (FSGLLVVWLLSTLFIATLTWF), 37–57 (VFFSLLFLLTFFFGFPLTSVL), 63–83 (VGVAPPEILLQALLSAACFYG), 118–138 (VILMGIALVSVGIFFMHNGFL), 155–175 (GVALKRFFYFFIPAMLVVYFL), 181–201 (AWLFFLVSTVAFGLLTYMIVG), 207–227 (IIIAFAIFLFIGIIRGWISLW), 228–248 (MLAAAGVLGIVGMFWLALKRY), 341–361 (LVVMGGALFIPLGAIVVGLII), 378–398 (YKAAILHSFCFGAIFNMIVLA), and 410–430 (VFFLVVFGASLLVAKLLFWLF).

Belongs to the WzyE family. In terms of assembly, probably part of a complex composed of WzxE, WzyE and WzzE.

It localises to the cell inner membrane. It functions in the pathway bacterial outer membrane biogenesis; enterobacterial common antigen biosynthesis. In terms of biological role, probably involved in the polymerization of enterobacterial common antigen (ECA) trisaccharide repeat units. The protein is Probable ECA polymerase of Salmonella arizonae (strain ATCC BAA-731 / CDC346-86 / RSK2980).